Reading from the N-terminus, the 246-residue chain is MSKLSVFFIFLFCSIATAAESLPDLKIEKLDEGVYVHTSFEEVNGWGVVPKHGLVVLVNAEAYLIDTPFTAKDTEKLVTWFVERGYKIKGSISSHFHSDSTGGIEWLNSRSIPTYASELTNELLKKDGKVQATNSFSGVNYWLVKNKIEVFYPGPGHTPDNVVVWLPERKILFGGCFIKPYGLGNLGDANIEAWPKSAKLLKSKYGKAKLVVPSHSEVGDASLLKLTLEQAVKGLNESKKPSKPSN.

An N-terminal signal peptide occupies residues 1-18 (MSKLSVFFIFLFCSIATA). Positions 95, 97, 99, 157, and 176 each coordinate Zn(2+). 2 residues coordinate a beta-lactam: Lys179 and Asn185. Zn(2+) is bound at residue His215.

It belongs to the metallo-beta-lactamase superfamily. Class-B beta-lactamase family. In terms of assembly, monomer. Zn(2+) serves as cofactor.

The protein resides in the periplasm. It catalyses the reaction a beta-lactam + H2O = a substituted beta-amino acid. Its activity is regulated as follows. Inhibited by captopril stereoisomers, Hg(2+), Fe(2+), Cu(2+), chelating agents such as EDTA, dansyl derivatives, including dansyl-C4SH, bisthiazolidines, mercaptoacetic acid and by PMPC phosphonates. Inhibited by 3-(3-mercaptopropionylsulfanyl)-propionic acid pentafluorophenyl ester, via a covalent binding to Lys-179. Not susceptible to inactivation by the beta-lactamase-blocking agents clavulanic acid or cloxacillin. Functionally, class B beta-lactamase which confers resistance to the beta-lactam antibiotics, including penicillins, cephalosporins and carbapenems. Acts via hydrolysis of the beta-lactam ring. Has penicillin-, cephalosporin- and carbapenem-hydrolyzing activities. Has endoribonuclease activity, cleaving substrate RNAs preferentially between U/C and A, in vitro. This Serratia marcescens protein is Metallo-beta-lactamase IMP-1.